The chain runs to 361 residues: 3-dehydroquinate synthase (361 aa).

NAD(+)-binding positions include 69 to 74 (DGEEYK), 103 to 107 (GVIGD), 127 to 128 (TT), Lys-140, Lys-149, and 167 to 170 (TLDT). Zn(2+) contacts are provided by Glu-182, His-245, and His-262.

This sequence belongs to the sugar phosphate cyclases superfamily. Dehydroquinate synthase family. Co(2+) serves as cofactor. Requires Zn(2+) as cofactor. The cofactor is NAD(+).

It localises to the cytoplasm. It catalyses the reaction 7-phospho-2-dehydro-3-deoxy-D-arabino-heptonate = 3-dehydroquinate + phosphate. The protein operates within metabolic intermediate biosynthesis; chorismate biosynthesis; chorismate from D-erythrose 4-phosphate and phosphoenolpyruvate: step 2/7. In terms of biological role, catalyzes the conversion of 3-deoxy-D-arabino-heptulosonate 7-phosphate (DAHP) to dehydroquinate (DHQ). The chain is 3-dehydroquinate synthase from Thioalkalivibrio sulfidiphilus (strain HL-EbGR7).